The primary structure comprises 90 residues: Small ribosomal subunit protein bS20 (90 aa).

The disordered stretch occupies residues 1-21 (MANHKSALKRVRQTKKRTERN).

This sequence belongs to the bacterial ribosomal protein bS20 family.

In terms of biological role, binds directly to 16S ribosomal RNA. This Nitratiruptor sp. (strain SB155-2) protein is Small ribosomal subunit protein bS20.